The chain runs to 401 residues: 26S proteasome regulatory subunit 6A (401 aa).

189–196 (GPPGTGKT) is an ATP binding site.

It belongs to the AAA ATPase family. In terms of assembly, the 26S proteasome consists of a 20S proteasome core and two 19S regulatory subunits. The 20S proteasome core is composed of 28 subunits that are arranged in four stacked rings, resulting in a barrel-shaped structure. The two end rings are each formed by seven alpha subunits, and the two central rings are each formed by seven beta subunits. The catalytic chamber with the active sites is on the inside of the barrel.

It is found in the cytoplasm. Its subcellular location is the nucleus. Acts as a regulatory subunit of the 26S proteasome which degrades poly-ubiquitinated proteins in the cytoplasm and in the nucleus. It is essential for the regulated turnover of proteins and for the removal of misfolded proteins. The proteasome is a multicatalytic proteinase complex that is characterized by its ability to cleave peptides with Arg, Phe, Tyr, Leu, and Glu adjacent to the leaving group at neutral or slightly basic pH. The sequence is that of 26S proteasome regulatory subunit 6A (RPT5) from Encephalitozoon cuniculi (strain GB-M1) (Microsporidian parasite).